The primary structure comprises 247 residues: Small ribosomal subunit protein uS2 (247 aa).

The protein belongs to the universal ribosomal protein uS2 family.

The chain is Small ribosomal subunit protein uS2 from Halorhodospira halophila (strain DSM 244 / SL1) (Ectothiorhodospira halophila (strain DSM 244 / SL1)).